Here is an 819-residue protein sequence, read N- to C-terminus: Disintegrin and metalloproteinase domain-containing protein 9 (819 aa).

The first 28 residues, 1-28, serve as a signal peptide directing secretion; the sequence is MGSGARFPSGTLRVRWLLLLGLVGPVLG. The Extracellular portion of the chain corresponds to 29-697; sequence AARPGFQQTS…YNEMNTALRD (669 aa). N-linked (GlcNAc...) asparagine glycosylation is found at N125, N144, N154, and N231. The Peptidase M12B domain maps to 212-406; that stretch reads RYVELFIVVD…KGGNCLLNIP (195 aa). 7 cysteine pairs are disulfide-bonded: C322–C401, C363–C385, C365–C370, C473–C493, C644–C656, C650–C662, and C664–C673. H347 contacts Zn(2+). The active site involves E348. Positions 351 and 357 each coordinate Zn(2+). 2 N-linked (GlcNAc...) asparagine glycosylation sites follow: N381 and N487. Residues 414–501 enclose the Disintegrin domain; the sequence is APSCGNKLVD…FCQPDVFIQN (88 aa). The 55-residue stretch at 644–698 folds into the EGF-like domain; sequence CDVQKKCHGHGVCNSNKNCHCENGWAPPNCETKGYGGSVDSGPTYNEMNTALRDG. The helical transmembrane segment at 698–718 threads the bilayer; it reads GLLVFFFLIVPLIVCAIFIFI. At 719–819 the chain is on the cytoplasmic side; that stretch reads KRDQLWRSYF…PAPPLYSSLT (101 aa). Disordered regions lie at residues 734-763 and 780-819; these read QTYE…VTPP and AKQP…SSLT. A compositionally biased stretch (polar residues) spans 735 to 750; that stretch reads TYESDGKNQANPSRQP. S758 bears the Phosphoserine mark. T761 carries the post-translational modification Phosphothreonine.

As to quaternary structure, interacts with SH3GL2 and SNX9 through its cytoplasmic tail. Interacts with ITGA6. Zn(2+) is required as a cofactor. Post-translationally, proteolytically cleaved in the trans-Golgi network before it reaches the plasma membrane to generate a mature protein. The removal of the pro-domain occurs via cleavage at two different sites. Processed most likely by a pro-protein convertase such as furin, at the boundary between the pro-domain and the catalytic domain. An additional upstream cleavage pro-protein convertase site (Arg-56/Glu-57) has an important role in the activation of ADAM9. In terms of processing, phosphorylation is induced in vitro by phorbol-12-myristate-13-acetate (PMA). Widely expressed. Expressed in chondrocytes. Isoform 2 is highly expressed in liver and heart.

Its subcellular location is the cell membrane. It localises to the secreted. With respect to regulation, synthesized as an inactive form which is proteolytically cleaved to generate an active enzyme. Processing at the upstream site is particularly important for activation of the proenzyme, whereas processing at the boundary between the pro-domain and the catalytic domain does not appear to be essential. Inhibited by hydroxamic acid-based inhibitors. Functionally, metalloprotease that cleaves and releases a number of molecules with important roles in tumorigenesis and angiogenesis, such as TEK, KDR, EPHB4, CD40, VCAM1 and CDH5. May mediate cell-cell, cell-matrix interactions and regulate the motility of cells via interactions with integrins. May act as alpha-secretase for amyloid precursor protein (APP). The chain is Disintegrin and metalloproteinase domain-containing protein 9 (ADAM9) from Homo sapiens (Human).